The sequence spans 200 residues: Lipopolysaccharide core heptose(II)-phosphate phosphatase (200 aa).

An N-terminal signal peptide occupies residues 1–25; the sequence is MLAFCRSSLKSKKYFIILLALAAIA.

Belongs to the phosphoglycerate mutase family. Ais subfamily.

It localises to the periplasm. Its pathway is bacterial outer membrane biogenesis; lipopolysaccharide metabolism. Its function is as follows. Catalyzes the dephosphorylation of heptose(II) of the outer membrane lipopolysaccharide core. The chain is Lipopolysaccharide core heptose(II)-phosphate phosphatase from Escherichia coli O157:H7 (strain EC4115 / EHEC).